A 578-amino-acid polypeptide reads, in one-letter code: Isocitrate dehydrogenase kinase/phosphatase (578 aa).

Residues 315 to 321 (APGIRGM) and Lys336 contribute to the ATP site. The active site involves Asp371.

It belongs to the AceK family.

It localises to the cytoplasm. The catalysed reaction is L-seryl-[isocitrate dehydrogenase] + ATP = O-phospho-L-seryl-[isocitrate dehydrogenase] + ADP + H(+). Its function is as follows. Bifunctional enzyme which can phosphorylate or dephosphorylate isocitrate dehydrogenase (IDH) on a specific serine residue. This is a regulatory mechanism which enables bacteria to bypass the Krebs cycle via the glyoxylate shunt in response to the source of carbon. When bacteria are grown on glucose, IDH is fully active and unphosphorylated, but when grown on acetate or ethanol, the activity of IDH declines drastically concomitant with its phosphorylation. The sequence is that of Isocitrate dehydrogenase kinase/phosphatase from Escherichia coli O17:K52:H18 (strain UMN026 / ExPEC).